A 63-amino-acid polypeptide reads, in one-letter code: Hypoxia-inducible lipid droplet-associated protein (63 aa).

Residues 1 to 37 (MKHVLNLYLLGVVLTLLSIFVRVMESLEGLLESPSPG) form a required for targeting to lipid droplets region. The helical transmembrane segment at 7 to 23 (LYLLGVVLTLLSIFVRV) threads the bilayer. The segment at 31–63 (LESPSPGTSWTTRSQLANTEPTKGLPDHPSRSM) is disordered. Over residues 35–51 (SPGTSWTTRSQLANTEP) the composition is skewed to polar residues. Serine 44 bears the Phosphoserine mark.

As to expression, highly expressed in renal cell carcinoma cells but barely detectable in adjacent normal kidney tissue. Detected in some cervical and endometrial cancers. Expression also detected in fetal kidney with little or no expression observed in normal adult heart, liver, lung, pancreas, prostate or spinal cord (at protein level).

It localises to the lipid droplet. The protein localises to the secreted. Its subcellular location is the membrane. In terms of biological role, increases intracellular lipid accumulation. Stimulates expression of cytokines including IL6, MIF and VEGFA. Enhances cell growth and proliferation. This Homo sapiens (Human) protein is Hypoxia-inducible lipid droplet-associated protein (HILPDA).